The following is a 335-amino-acid chain: Acetyl-coenzyme A carboxylase carboxyl transferase subunit alpha (335 aa).

In terms of domain architecture, CoA carboxyltransferase C-terminal spans 40 to 294; that stretch reads QLETLATRRR…KASIERHLSE (255 aa).

This sequence belongs to the AccA family. As to quaternary structure, acetyl-CoA carboxylase is a heterohexamer composed of biotin carboxyl carrier protein (AccB), biotin carboxylase (AccC) and two subunits each of ACCase subunit alpha (AccA) and ACCase subunit beta (AccD).

The protein localises to the cytoplasm. It carries out the reaction N(6)-carboxybiotinyl-L-lysyl-[protein] + acetyl-CoA = N(6)-biotinyl-L-lysyl-[protein] + malonyl-CoA. Its pathway is lipid metabolism; malonyl-CoA biosynthesis; malonyl-CoA from acetyl-CoA: step 1/1. Component of the acetyl coenzyme A carboxylase (ACC) complex. First, biotin carboxylase catalyzes the carboxylation of biotin on its carrier protein (BCCP) and then the CO(2) group is transferred by the carboxyltransferase to acetyl-CoA to form malonyl-CoA. The chain is Acetyl-coenzyme A carboxylase carboxyl transferase subunit alpha from Prochlorococcus marinus (strain MIT 9515).